A 448-amino-acid polypeptide reads, in one-letter code: tRNA modification GTPase MnmE (448 aa).

Residues Arg21, Glu80, and Lys119 each coordinate (6S)-5-formyl-5,6,7,8-tetrahydrofolate. The TrmE-type G domain maps to 215 to 370 (GVKLAIVGRP…LSEEILKKVG (156 aa)). K(+) is bound at residue Asn225. GTP-binding positions include 225-230 (NVGKSS), 244-250 (TDIAGTT), and 269-272 (DTAG). Residue Ser229 coordinates Mg(2+). Residues Thr244, Ile246, and Thr249 each coordinate K(+). Residue Thr250 coordinates Mg(2+). Residue Lys448 coordinates (6S)-5-formyl-5,6,7,8-tetrahydrofolate.

Belongs to the TRAFAC class TrmE-Era-EngA-EngB-Septin-like GTPase superfamily. TrmE GTPase family. In terms of assembly, homodimer. Heterotetramer of two MnmE and two MnmG subunits. The cofactor is K(+).

It is found in the cytoplasm. Exhibits a very high intrinsic GTPase hydrolysis rate. Involved in the addition of a carboxymethylaminomethyl (cmnm) group at the wobble position (U34) of certain tRNAs, forming tRNA-cmnm(5)s(2)U34. The polypeptide is tRNA modification GTPase MnmE (Aquifex aeolicus (strain VF5)).